The primary structure comprises 466 residues: Secreted RxLR effector protein 101 (466 aa).

An N-terminal signal peptide occupies residues 1–21 (MRGAYSVITALLVVASSQIAA). The RxLR-dEER motif lies at 48–63 (RYLRGSQHVHDSNEER). Disordered regions lie at residues 99 to 127 (KMPHAATAGKKVSRVTRTGKKMTSHGANA) and 384 to 405 (RTFNGNTDTASLPSKRSKVRSS). Positions 109–121 (KVSRVTRTGKKMT) are enriched in basic residues. The span at 385 to 395 (TFNGNTDTASL) shows a compositional bias: polar residues.

This sequence belongs to the RxLR effector family.

The protein localises to the secreted. Its subcellular location is the host nucleus. Functionally, secreted effector that partially suppresses the host cell death induced by cell death-inducing proteins. The chain is Secreted RxLR effector protein 101 from Plasmopara viticola (Downy mildew of grapevine).